The following is a 320-amino-acid chain: tRNA dimethylallyltransferase (320 aa).

16 to 23 contributes to the ATP binding site; it reads GPTASGKT. 18 to 23 is a binding site for substrate; sequence TASGKT. Interaction with substrate tRNA regions lie at residues 41-44, 165-169, and 247-252; these read DSAL, QRIQR, and RCVGYR.

Belongs to the IPP transferase family. In terms of assembly, monomer. It depends on Mg(2+) as a cofactor.

The catalysed reaction is adenosine(37) in tRNA + dimethylallyl diphosphate = N(6)-dimethylallyladenosine(37) in tRNA + diphosphate. Catalyzes the transfer of a dimethylallyl group onto the adenine at position 37 in tRNAs that read codons beginning with uridine, leading to the formation of N6-(dimethylallyl)adenosine (i(6)A). The polypeptide is tRNA dimethylallyltransferase (Azoarcus sp. (strain BH72)).